The primary structure comprises 370 residues: Queuine tRNA-ribosyltransferase (370 aa).

Asp89 acts as the Proton acceptor in catalysis. Substrate is bound by residues 89–93 (DSGGF), Asp143, Gln185, and Gly212. Residues 243-249 (GVGKPED) are RNA binding. Asp262 acts as the Nucleophile in catalysis. Residues 267-271 (TRNAR) form an RNA binding; important for wobble base 34 recognition region. Cys300, Cys302, Cys305, and His331 together coordinate Zn(2+).

This sequence belongs to the queuine tRNA-ribosyltransferase family. In terms of assembly, homodimer. Within each dimer, one monomer is responsible for RNA recognition and catalysis, while the other monomer binds to the replacement base PreQ1. The cofactor is Zn(2+).

The enzyme catalyses 7-aminomethyl-7-carbaguanine + guanosine(34) in tRNA = 7-aminomethyl-7-carbaguanosine(34) in tRNA + guanine. It participates in tRNA modification; tRNA-queuosine biosynthesis. In terms of biological role, catalyzes the base-exchange of a guanine (G) residue with the queuine precursor 7-aminomethyl-7-deazaguanine (PreQ1) at position 34 (anticodon wobble position) in tRNAs with GU(N) anticodons (tRNA-Asp, -Asn, -His and -Tyr). Catalysis occurs through a double-displacement mechanism. The nucleophile active site attacks the C1' of nucleotide 34 to detach the guanine base from the RNA, forming a covalent enzyme-RNA intermediate. The proton acceptor active site deprotonates the incoming PreQ1, allowing a nucleophilic attack on the C1' of the ribose to form the product. After dissociation, two additional enzymatic reactions on the tRNA convert PreQ1 to queuine (Q), resulting in the hypermodified nucleoside queuosine (7-(((4,5-cis-dihydroxy-2-cyclopenten-1-yl)amino)methyl)-7-deazaguanosine). In Hydrogenovibrio crunogenus (strain DSM 25203 / XCL-2) (Thiomicrospira crunogena), this protein is Queuine tRNA-ribosyltransferase.